The primary structure comprises 463 residues: ATP synthase subunit beta (463 aa).

Residue 152–159 participates in ATP binding; sequence GGAGVGKT.

The protein belongs to the ATPase alpha/beta chains family. As to quaternary structure, F-type ATPases have 2 components, CF(1) - the catalytic core - and CF(0) - the membrane proton channel. CF(1) has five subunits: alpha(3), beta(3), gamma(1), delta(1), epsilon(1). CF(0) has three main subunits: a(1), b(2) and c(9-12). The alpha and beta chains form an alternating ring which encloses part of the gamma chain. CF(1) is attached to CF(0) by a central stalk formed by the gamma and epsilon chains, while a peripheral stalk is formed by the delta and b chains.

The protein localises to the cell membrane. It carries out the reaction ATP + H2O + 4 H(+)(in) = ADP + phosphate + 5 H(+)(out). Produces ATP from ADP in the presence of a proton gradient across the membrane. The catalytic sites are hosted primarily by the beta subunits. The sequence is that of ATP synthase subunit beta from Clostridium botulinum (strain Eklund 17B / Type B).